Here is a 347-residue protein sequence, read N- to C-terminus: NADH-ubiquinone oxidoreductase chain 2 (347 aa).

A run of 10 helical transmembrane segments spans residues L4 to M21, W26 to L44, Y59 to L79, L93 to V115, L149 to G169, I178 to P198, L200 to M220, A241 to L261, E274 to M294, and T323 to L343.

The protein belongs to the complex I subunit 2 family. Core subunit of respiratory chain NADH dehydrogenase (Complex I) which is composed of 45 different subunits. Interacts with TMEM242.

It is found in the mitochondrion inner membrane. The catalysed reaction is a ubiquinone + NADH + 5 H(+)(in) = a ubiquinol + NAD(+) + 4 H(+)(out). In terms of biological role, core subunit of the mitochondrial membrane respiratory chain NADH dehydrogenase (Complex I) which catalyzes electron transfer from NADH through the respiratory chain, using ubiquinone as an electron acceptor. Essential for the catalytic activity and assembly of complex I. This chain is NADH-ubiquinone oxidoreductase chain 2, found in Cardioderma cor (Heart-nosed bat).